The chain runs to 179 residues: ATP-dependent protease subunit HslV (179 aa).

Thr-7 is a catalytic residue. Na(+) contacts are provided by Gly-162, Cys-165, and Thr-168.

This sequence belongs to the peptidase T1B family. HslV subfamily. A double ring-shaped homohexamer of HslV is capped on each side by a ring-shaped HslU homohexamer. The assembly of the HslU/HslV complex is dependent on binding of ATP.

The protein resides in the cytoplasm. The catalysed reaction is ATP-dependent cleavage of peptide bonds with broad specificity.. Allosterically activated by HslU binding. Protease subunit of a proteasome-like degradation complex believed to be a general protein degrading machinery. This chain is ATP-dependent protease subunit HslV, found in Bordetella bronchiseptica (strain ATCC BAA-588 / NCTC 13252 / RB50) (Alcaligenes bronchisepticus).